A 330-amino-acid chain; its full sequence is NADH-quinone oxidoreductase subunit H (330 aa).

Helical transmembrane passes span 11–31, 81–101, 114–134, 154–174, 187–207, 238–258, 270–290, and 309–329; these read ILVA…CGAL, FIFV…FAII, IGIL…LFAG, ISYE…VGSF, LWFI…GVAV, FFVG…TLFF, QIPF…FILL, and FCLP…LAAA.

Belongs to the complex I subunit 1 family. In terms of assembly, NDH-1 is composed of 13 different subunits. Subunits NuoA, H, J, K, L, M, N constitute the membrane sector of the complex.

Its subcellular location is the cell inner membrane. It catalyses the reaction a quinone + NADH + 5 H(+)(in) = a quinol + NAD(+) + 4 H(+)(out). Its function is as follows. NDH-1 shuttles electrons from NADH, via FMN and iron-sulfur (Fe-S) centers, to quinones in the respiratory chain. The immediate electron acceptor for the enzyme in this species is believed to be ubiquinone. Couples the redox reaction to proton translocation (for every two electrons transferred, four hydrogen ions are translocated across the cytoplasmic membrane), and thus conserves the redox energy in a proton gradient. This subunit may bind ubiquinone. The chain is NADH-quinone oxidoreductase subunit H from Ectopseudomonas mendocina (strain ymp) (Pseudomonas mendocina).